The chain runs to 145 residues: MLTAEEKASVISLFAKVNVEEVGGEALGRLLVVYPWTQRFFEHFGDLSSADAILGNPKVKGHGKKVLNSFSEGLKQLDDLKGAFASLSELHCDKLHVDPENFRLLGNVLVVVLARRFGGEFTPELQANFQKVVTGVANALAHRYH.

Residues 1–145 (MLTAEEKASV…VANALAHRYH (145 aa)) form the Globin domain. The heme b site is built by His-62 and His-91.

Belongs to the globin family. In terms of assembly, heterotetramer of two alpha chains and two beta chains.

The sequence is that of Hemoglobin fetal subunit beta from Ovis aries (Sheep).